Here is an 866-residue protein sequence, read N- to C-terminus: DNA mismatch repair protein MutS (866 aa).

Position 613–620 (613–620) interacts with ATP; it reads GPNMGGKS.

This sequence belongs to the DNA mismatch repair MutS family.

This protein is involved in the repair of mismatches in DNA. It is possible that it carries out the mismatch recognition step. This protein has a weak ATPase activity. This is DNA mismatch repair protein MutS from Haemophilus ducreyi (strain 35000HP / ATCC 700724).